The primary structure comprises 341 residues: General L-amino acid-binding periplasmic protein AapJ (341 aa).

The first 23 residues, 1–23, serve as a signal peptide directing secretion; the sequence is MKNKLLSAAIGAAVLAVGASAAS.

It belongs to the bacterial solute-binding protein 3 family. In terms of assembly, the complex is composed of two ATP-binding proteins (AapP), two transmembrane proteins (AapM and AapQ) and a solute-binding protein (AapJ).

The protein localises to the periplasm. Its function is as follows. Part of the ABC transporter complex AapJQMP involved in uptake of L-amino acids. Affects the efflux of these amino acids as well. Essential for the development of bacteroids, the differentiated legume-symbiotic forms of this bacterium, and for the effective N(2) fixation by them. The polypeptide is General L-amino acid-binding periplasmic protein AapJ (aapJ) (Rhizobium johnstonii (strain DSM 114642 / LMG 32736 / 3841) (Rhizobium leguminosarum bv. viciae)).